A 258-amino-acid polypeptide reads, in one-letter code: Elongation factor Ts (258 aa).

An involved in Mg(2+) ion dislocation from EF-Tu region spans residues 81 to 84; it reads TDFV. The disordered stretch occupies residues 216–258; that stretch reads GLKPAEAPKVEETPPAPPEEPAPEPAPAAESKPAKKGSAKKKK. Pro residues predominate over residues 229-241; it reads PPAPPEEPAPEPA. Residues 249–258 show a composition bias toward basic residues; it reads AKKGSAKKKK.

Belongs to the EF-Ts family.

Its subcellular location is the cytoplasm. Functionally, associates with the EF-Tu.GDP complex and induces the exchange of GDP to GTP. It remains bound to the aminoacyl-tRNA.EF-Tu.GTP complex up to the GTP hydrolysis stage on the ribosome. In Synechococcus sp. (strain JA-2-3B'a(2-13)) (Cyanobacteria bacterium Yellowstone B-Prime), this protein is Elongation factor Ts.